Consider the following 132-residue polypeptide: MKALTSNVSKALPIGATLQCVDNTGAREIQIISVKGFKGVRRRLDVAGVGDLVVASVKKGTADMRREVVNAVVIRQKKEYMRADGLRVKFEDNAAVIITPEGILKGSEVRGPVAKEAADRWPSVGSAASILV.

Belongs to the universal ribosomal protein uL14 family. In terms of assembly, part of the 50S ribosomal subunit. Forms a cluster with proteins L3 and L24e, part of which may contact the 16S rRNA in 2 intersubunit bridges.

In terms of biological role, binds to 23S rRNA. Forms part of two intersubunit bridges in the 70S ribosome. The polypeptide is Large ribosomal subunit protein uL14 (Methanobrevibacter smithii (strain ATCC 35061 / DSM 861 / OCM 144 / PS)).